The sequence spans 243 residues: MKIDILTLFPEMFAPLEHSIVGKAKEKGLLDIHYHNFRDHAEKARHVDDEPYGGGQGMLLRAQPIFDTMDSIQATKPRVILLDPAGKPFHQSYAEELALEEELIFICGHYEGYDERIKTLVTDEISLGDFVLTGGELAAMTMIDATVRLIPNVLGKQASHQEDSFSSGLLEYPQYTRPYDYRGMKVPDVLMSGHHEHIRLWRMEQSLKKTYLRRPDLLETYDFSDEERRIFDSIKSELSEGEN.

Residues Gly-108 and 127-132 (LGDFVL) contribute to the S-adenosyl-L-methionine site.

The protein belongs to the RNA methyltransferase TrmD family. Homodimer.

The protein localises to the cytoplasm. It carries out the reaction guanosine(37) in tRNA + S-adenosyl-L-methionine = N(1)-methylguanosine(37) in tRNA + S-adenosyl-L-homocysteine + H(+). Specifically methylates guanosine-37 in various tRNAs. The protein is tRNA (guanine-N(1)-)-methyltransferase of Streptococcus equi subsp. zooepidemicus (strain H70).